The chain runs to 503 residues: EZH inhibitory protein (503 aa).

A compositionally biased stretch (basic and acidic residues) spans 1–16 (MATQSDMEKEQKHQQD). 3 disordered regions span residues 1–72 (MATQ…AAAA), 97–462 (HSDR…RSIS), and 483–503 (VPPE…PPEP). Over residues 41–72 (PAASVTTVSSQASPSGGAALSSSTAGSSAAAA) the composition is skewed to low complexity. Residues 97–107 (HSDRQDCRSPH) show a composition bias toward basic and acidic residues. Positions 184-197 (YPCSGASTSSQATQ) are enriched in polar residues. S259 carries the phosphoserine modification. Residues 345–366 (LRSRSTQQRSALLSRRSLSGSA) show a composition bias toward low complexity. The interval 401–409 (WHAVRMRAS) is sufficient for interaction with EZH2. Residues 403-423 (AVRMRASSPSPPGRFFLPIPQ) form a necessary and sufficient for inhibition of PRC2/EED-EZH1 and PRC2/EED-EZH2 complex activity region. The segment covering 428 to 453 (SSSSSYASNSSSPSRSPGLSPSSPSP) has biased composition (low complexity).

In terms of assembly, interacts with PRC2/EED-EZH1 complex member EZH1 and with PRC2/EED-EZH2 complex member EZH2; the interaction blocks EZH1/EZH2 methyltransferase activity. Interacts (via C-terminus) with SUZ12 which is a member of the PRC2/EED-EZH1 and PRC2/EED-EZH2 complexes. In terms of tissue distribution, in testis, detected in male germ cells inside the seminiferous tubules, especially in spermatogonia and round spermatids (at protein level). In the ovary, expressed in primordial follicles and oocytes but not the external follicle cells (at protein level).

The protein resides in the nucleus. It localises to the cytoplasm. Inhibits PRC2/EED-EZH1 and PRC2/EED-EZH2 complex function by inhibiting EZH1/EZH2 methyltransferase activity, thereby causing down-regulation of histone H3 trimethylation on 'Lys-27' (H3K27me3). Probably inhibits methyltransferase activity by limiting the stimulatory effect of cofactors such as AEBP2 and JARID2. Inhibits H3K27me3 deposition during spermatogenesis and oogenesis. The chain is EZH inhibitory protein from Homo sapiens (Human).